Consider the following 62-residue polypeptide: Frontoxin III (62 aa).

Disulfide bonds link Cys3–Cys24, Cys17–Cys41, Cys43–Cys54, and Cys55–Cys60.

In terms of tissue distribution, expressed by the venom gland.

It localises to the secreted. In terms of biological role, binds to muscle nicotinic acetylcholine receptor (nAChR) and inhibit acetylcholine from binding to the receptor, thereby impairing neuromuscular transmission. The polypeptide is Frontoxin III (Micrurus frontalis (Coral snake)).